The primary structure comprises 305 residues: MRIVILDELLSREMDGSNDGSSARVNSLKHVIKRNKMDMADDAPSSLDLMRRIFQAEISREIHQIMERHTRTTLLPAIENLRKNGHVVDESVLNGLYCNILEAAKKPYQKDPEPMPPICTNGNGFLDINSQEHENNLKRGYESDSSDVSGVSHCSDAKRRRGRPRKDEEAYRLEMTPPTMNEVIRWNPDRIDVNTRFITATKIAQVMGMPPSILFNKYPRMFRYSCDEDDKNILHEQNLLIRAPGRCYLLVAEDARQLVPSTYFQDVLNVSFLISEPLLSKIRQKAASTYEKYKVFLPTQPNNYL.

A disordered region spans residues 138 to 168 (KRGYESDSSDVSGVSHCSDAKRRRGRPRKDE). The a.T hook DNA-binding region spans 158–170 (KRRRGRPRKDEEA).

As to quaternary structure, interacts with phosphorylated egl-4. May interact with itself. May be a component of a histone deacetylase complex containing saeg-2, saeg-1 and hda-2. In terms of tissue distribution, ubiquitously expressed.

The protein resides in the nucleus. In terms of biological role, as a likely component of a histone deacetylase complex, together with saeg-1 and hda-2, functions downstream of the cAMP-dependent kinase egl-4 to regulate the expression of genes required for egg-laying and foraging. The sequence is that of Suppressor of activated egl-4 protein 2 from Caenorhabditis elegans.